Reading from the N-terminus, the 324-residue chain is PTS system glucose-specific EIICBA component (324 aa).

The PTS EIIC type-1 domain maps to 1-63 (HLLNVKIGMT…KWDLATPGRE (63 aa)). A run of 2 helical transmembrane segments spans residues 5-25 (VKIGMTFSGGVIDFLLFGVLP) and 28-48 (TAWWLVIPVGLVFAVIYYFGF). The PTS EIIB type-1 domain maps to 78 to 159 (GDLPYEVLAA…QDIMQGKAPA (82 aa)). The active-site Phosphocysteine intermediate; for EIIB activity is cysteine 100. A disordered region spans residues 156-177 (KAPARAEEKPKTAASEAAESET). A compositionally biased stretch (low complexity) spans 167–177 (TAASEAAESET). Positions 194–298 (DQVFSQKMMG…SIVTPVIFTN (105 aa)) constitute a PTS EIIA type-1 domain. Histidine 246 acts as the Tele-phosphohistidine intermediate; for EIIA activity in catalysis.

Its subcellular location is the cell membrane. It carries out the reaction N(pros)-phospho-L-histidyl-[protein] + D-glucose(out) = D-glucose 6-phosphate(in) + L-histidyl-[protein]. The phosphoenolpyruvate-dependent sugar phosphotransferase system (sugar PTS), a major carbohydrate active transport system, catalyzes the phosphorylation of incoming sugar substrates concomitantly with their translocation across the cell membrane. This system is involved in glucose transport. This is PTS system glucose-specific EIICBA component (ptsG) from Geobacillus stearothermophilus (Bacillus stearothermophilus).